We begin with the raw amino-acid sequence, 279 residues long: Large ribosomal subunit protein uL2 (279 aa).

2 disordered regions span residues 34-55 (LAPL…RHKG) and 221-279 (RGMA…RKAK). Over residues 40 to 55 (SGGRNRAGRITSRHKG) the composition is skewed to basic residues. Gly residues predominate over residues 232–242 (MGGGEGRSKSG). Residues 259 to 279 (LKTRNKKKASSKLIVRGRKAK) are compositionally biased toward basic residues.

It belongs to the universal ribosomal protein uL2 family. Part of the 50S ribosomal subunit. Forms a bridge to the 30S subunit in the 70S ribosome.

One of the primary rRNA binding proteins. Required for association of the 30S and 50S subunits to form the 70S ribosome, for tRNA binding and peptide bond formation. It has been suggested to have peptidyltransferase activity; this is somewhat controversial. Makes several contacts with the 16S rRNA in the 70S ribosome. This is Large ribosomal subunit protein uL2 from Chlorobium phaeobacteroides (strain BS1).